We begin with the raw amino-acid sequence, 764 residues long: Thyrotropin receptor (764 aa).

A signal peptide spans 1 to 20 (MRPPPLLHLALLLALPRSLG). Residues 21–413 (GKGCPSPPCE…EFNPCEDIMG (393 aa)) lie on the Extracellular side of the membrane. Residues C31 and C41 are joined by a disulfide bond. 2 N-linked (GlcNAc...) asparagine glycosylation sites follow: N77 and N99. 6 LRR repeats span residues 125-149 (LPLL…KVYS), 150-174 (TDVF…AFQG), 176-199 (CNET…AFNG), 201-223 (KLDA…AFGG), 225-248 (YSGP…GLEH), and 250-271 (KELI…SFLH). Residues N177 and N198 are each glycosylated (N-linked (GlcNAc...) asparagine). N302 carries N-linked (GlcNAc...) asparagine glycosylation. Y385 is modified (sulfotyrosine). A helical transmembrane segment spans residues 414 to 441 (YKFLRIVVWFVSLLALLGNVFVLIVLLT). Residues 442–450 (SHYKLTVPR) are Cytoplasmic-facing. A helical transmembrane segment spans residues 451–473 (FLMCNLAFADFCMGMYLLLIASV). Over 474–494 (DLYTHSEYYNHAIDWQTGPGC) the chain is Extracellular. An intrachain disulfide couples C494 to C569. Residues 495–517 (NTAGFFTVFASELSVYTLTVITL) traverse the membrane as a helical segment. Over 518–537 (ERWYAITFAMRLDRKIRLRH) the chain is Cytoplasmic. A helical membrane pass occupies residues 538 to 560 (AYAIMVGGWVCCFLLALLPLVGI). The Extracellular portion of the chain corresponds to 561-580 (SSYAKVSICLPMDTETPLAL). The chain crosses the membrane as a helical span at residues 581 to 602 (AYIILVLLLNIVAFIIVCSCYV). Over 603–625 (KIYITVRNPQYNPGDKDTKIAKR) the chain is Cytoplasmic. A helical transmembrane segment spans residues 626 to 649 (MAVLIFTDFMCMAPISFYALSALM). Over 650–660 (NKPLITVTNSK) the chain is Extracellular. The helical transmembrane segment at 661–682 (ILLVLFYPLNSCANPFLYAIFT) threads the bilayer. The Cytoplasmic portion of the chain corresponds to 683 to 764 (KAFQRDVFIL…ISKEYNQTVL (82 aa)). A PDZ-binding motif is present at residues 762–764 (TVL).

This sequence belongs to the G-protein coupled receptor 1 family. FSH/LSH/TSH subfamily. In terms of assembly, interacts with heterodimer GPHA2:GPHB5; this interaction stimulates cAMP production. Interacts (via the PDZ-binding motif) with SCRIB; regulates TSHR trafficking and function. Post-translationally, glycosylated. Sulfated. Sulfation on Tyr-385 plays a role in thyrotropin receptor binding and activation.

Its subcellular location is the cell membrane. The protein localises to the basolateral cell membrane. In terms of biological role, receptor for the thyroid-stimulating hormone (TSH) or thyrotropin. Also acts as a receptor for the heterodimeric glycoprotein hormone (GPHA2:GPHB5) or thyrostimulin. The activity of this receptor is mediated by G proteins which activate adenylate cyclase. Plays a central role in controlling thyroid cell metabolism. This chain is Thyrotropin receptor (TSHR), found in Canis lupus familiaris (Dog).